Reading from the N-terminus, the 286-residue chain is MAENTMWHETLHDQFGQYFAVDNVLYHEKTDHQDLIIFENAAFGRVMALDGVVQTTERDEFIYHEMMTHVPLLAHGHAKHVLIIGGGDGAMLREVTRHKNVETITMVEIDAGVVSFCRQYLPNHNAGSYDDPRFTLVIDDGVNFVNQTHQTFDVIISDCTDPIGPGESLFTSAFYEGCKRCLNPGGIFVAQNGVCFLQQDEAIDSHRKLSHYFSDVGFYQAAIPTYYGGIMTFAWATDNDALRHLSSEIIQARFHAAGLKCRYYNPAIHAAAFALPQYLHDALSAQ.

Positions 5-238 (TMWHETLHDQ…GIMTFAWATD (234 aa)) constitute a PABS domain. Position 33 (Gln33) interacts with S-methyl-5'-thioadenosine. Residues His64 and Asp88 each contribute to the spermidine site. Residues Glu108 and 140–141 (DG) each bind S-methyl-5'-thioadenosine. Asp158 acts as the Proton acceptor in catalysis. Residue 158–161 (DCTD) coordinates spermidine. Pro165 is a binding site for S-methyl-5'-thioadenosine.

This sequence belongs to the spermidine/spermine synthase family. As to quaternary structure, homodimer or homotetramer.

It is found in the cytoplasm. The enzyme catalyses S-adenosyl 3-(methylsulfanyl)propylamine + putrescine = S-methyl-5'-thioadenosine + spermidine + H(+). It functions in the pathway amine and polyamine biosynthesis; spermidine biosynthesis; spermidine from putrescine: step 1/1. Catalyzes the irreversible transfer of a propylamine group from the amino donor S-adenosylmethioninamine (decarboxy-AdoMet) to putrescine (1,4-diaminobutane) to yield spermidine. The polypeptide is Polyamine aminopropyltransferase (Salmonella paratyphi A (strain ATCC 9150 / SARB42)).